A 199-amino-acid chain; its full sequence is dITP/XTP pyrophosphatase (199 aa).

A substrate-binding site is contributed by threonine 9–lysine 14. Mg(2+) is bound by residues glutamate 41 and aspartate 70. Residue aspartate 70 is the Proton acceptor of the active site. Residues serine 71, phenylalanine 157–aspartate 160, lysine 180, and histidine 185–arginine 186 contribute to the substrate site.

Belongs to the HAM1 NTPase family. Homodimer. The cofactor is Mg(2+).

The enzyme catalyses XTP + H2O = XMP + diphosphate + H(+). It catalyses the reaction dITP + H2O = dIMP + diphosphate + H(+). The catalysed reaction is ITP + H2O = IMP + diphosphate + H(+). In terms of biological role, pyrophosphatase that catalyzes the hydrolysis of nucleoside triphosphates to their monophosphate derivatives, with a high preference for the non-canonical purine nucleotides XTP (xanthosine triphosphate), dITP (deoxyinosine triphosphate) and ITP. Seems to function as a house-cleaning enzyme that removes non-canonical purine nucleotides from the nucleotide pool, thus preventing their incorporation into DNA/RNA and avoiding chromosomal lesions. The protein is dITP/XTP pyrophosphatase of Mannheimia succiniciproducens (strain KCTC 0769BP / MBEL55E).